The following is a 576-amino-acid chain: Kinetochore-associated protein DSN1 (576 aa).

Residues 1 to 11 (MSLEPTQTVSG) are compositionally biased toward polar residues. Disordered stretches follow at residues 1–22 (MSLEPTQTVSGTPPMLHQRTHK), 35–64 (LESDSKATLQSNEPTQKDEEETEYFENKQS), 185–205 (YSQPTAAGGPDMTTPQNISSS), and 227–246 (QPHYIQRTRERKKSIGSQRG). Over residues 235–246 (RERKKSIGSQRG) the composition is skewed to basic residues. Residue Ser-250 is modified to Phosphoserine. Residues 412 to 437 (RSRRKFSERRKALPKEPKKLLPNSKN) are disordered. Basic and acidic residues predominate over residues 420–430 (RRKALPKEPKK).

As to quaternary structure, component of the MIND kinetochore complex, which is composed of at least MTW1, NNF1, NSL1 and DSN1. Interacts with NSL1.

It localises to the nucleus. It is found in the chromosome. The protein localises to the centromere. The protein resides in the kinetochore. Its function is as follows. Acts as an essential component of the kinetochore MIND complex, which is required for the spindle checkpoint and kinetochore integrity. MIND plays a role in establishing a bipolar spindle-kinetochore interaction by joining kinetochore subunits contacting DNA to those contacting microtubules. In Saccharomyces cerevisiae (strain ATCC 204508 / S288c) (Baker's yeast), this protein is Kinetochore-associated protein DSN1 (DSN1).